We begin with the raw amino-acid sequence, 767 residues long: DNA topoisomerase 1 (767 aa).

A compositionally biased stretch (basic and acidic residues) spans 1-23 (MSGDHLHNDSQIEADFRLNDSHK). Residues 1 to 201 (MSGDHLHNDS…NKKKKPKKEE (201 aa)) are disordered. S2 bears the N-acetylserine mark. S2 and S10 each carry phosphoserine. The span at 24–39 (HKDKHKDREHRHKEHK) shows a compositional bias: basic residues. Residues 40–110 (KDKEKDREKS…DAKIKKEKEN (71 aa)) are compositionally biased toward basic and acidic residues. Position 59 is a phosphoserine (S59). A Glycyl lysine isopeptide (Lys-Gly) (interchain with G-Cter in SUMO2) cross-link involves residue K103. K105 is covalently cross-linked (Glycyl lysine isopeptide (Lys-Gly) (interchain with G-Cter in SUMO); alternate). A Glycyl lysine isopeptide (Lys-Gly) (interchain with G-Cter in SUMO2); alternate cross-link involves residue K105. Phosphoserine is present on S114. K119 participates in a covalent cross-link: Glycyl lysine isopeptide (Lys-Gly) (interchain with G-Cter in SUMO); alternate. Residue K119 forms a Glycyl lysine isopeptide (Lys-Gly) (interchain with G-Cter in SUMO2); alternate linkage. K119 participates in a covalent cross-link: Glycyl lysine isopeptide (Lys-Gly) (interchain with G-Cter in SUMO1); alternate. A compositionally biased stretch (basic and acidic residues) spans 131-168 (PKEDIKPLKRPRDEDDADYKPKKIKTEDIKKEKKRKLE). Glycyl lysine isopeptide (Lys-Gly) (interchain with G-Cter in SUMO2) cross-links involve residues K136 and K150. A Glycyl lysine isopeptide (Lys-Gly) (interchain with G-Cter in SUMO); alternate cross-link involves residue K155. K155 participates in a covalent cross-link: Glycyl lysine isopeptide (Lys-Gly) (interchain with G-Cter in SUMO2); alternate. Residues K160 and K166 each participate in a glycyl lysine isopeptide (Lys-Gly) (interchain with G-Cter in SUMO2) cross-link. Residue K174 forms a Glycyl lysine isopeptide (Lys-Gly) (interchain with G-Cter in SUMO2); alternate linkage. K174 is subject to N6-acetyllysine; alternate. Positions 181–201 (KDKDKKGAESDNKKKKPKKEE) are enriched in basic and acidic residues. Residue K206 forms a Glycyl lysine isopeptide (Lys-Gly) (interchain with G-Cter in SUMO2) linkage. Residue K282 is modified to N6-acetyllysine. Residue K338 forms a Glycyl lysine isopeptide (Lys-Gly) (interchain with G-Cter in SUMO2) linkage. Interaction with DNA stretches follow at residues 427 to 428 (KY) and 490 to 495 (RAGNEK). Positions 434-767 (SSRIKGEKDW…IDMTDEDYEF (334 aa)) constitute a Topo IB-type catalytic domain. S508 carries the phosphoserine; by CK2 modification. A Glycyl lysine isopeptide (Lys-Gly) (interchain with G-Cter in SUMO2) cross-link involves residue K551. Positions 587–589 (TAK) are interaction with DNA. Residues K644, K702, and K714 each participate in a glycyl lysine isopeptide (Lys-Gly) (interchain with G-Cter in SUMO2) cross-link. Residue Y725 is the O-(3'-phospho-DNA)-tyrosine intermediate of the active site.

The protein belongs to the type IB topoisomerase family. As to quaternary structure, monomer. Interacts with ERCC6. Interacts with TPRN; TPRN interacts with a number of DNA damage response proteins, is recruited to sites of DNA damage and may play a role in DNA damage repair. Post-translationally, sumoylated. Lys-119 is the main site of sumoylation. Sumoylation plays a role in partitioning TOP1 between nucleoli and nucleoplasm. Levels are dramatically increased on camptothecin (CPT) treatment. In terms of processing, phosphorylation at Ser-508 by CK2 increases binding to supercoiled DNA and sensitivity to camptothecin.

The protein resides in the nucleus. It is found in the nucleolus. The protein localises to the nucleoplasm. It catalyses the reaction ATP-independent breakage of single-stranded DNA, followed by passage and rejoining.. With respect to regulation, specifically inhibited by camptothecin (CPT), a plant alkaloid with antitumor activity. Functionally, releases the supercoiling and torsional tension of DNA introduced during the DNA replication and transcription by transiently cleaving and rejoining one strand of the DNA duplex. Introduces a single-strand break via transesterification at a target site in duplex DNA. The scissile phosphodiester is attacked by the catalytic tyrosine of the enzyme, resulting in the formation of a DNA-(3'-phosphotyrosyl)-enzyme intermediate and the expulsion of a 5'-OH DNA strand. The free DNA strand then rotates around the intact phosphodiester bond on the opposing strand, thus removing DNA supercoils. Finally, in the religation step, the DNA 5'-OH attacks the covalent intermediate to expel the active-site tyrosine and restore the DNA phosphodiester backbone. Regulates the alternative splicing of tissue factor (F3) pre-mRNA in endothelial cells. Involved in the circadian transcription of the core circadian clock component BMAL1 by altering the chromatin structure around the ROR response elements (ROREs) on the BMAL1 promoter. This chain is DNA topoisomerase 1 (TOP1), found in Cricetulus griseus (Chinese hamster).